Here is a 626-residue protein sequence, read N- to C-terminus: ATP-dependent RNA helicase dbp-8 (626 aa).

Residues 1 to 25 (MPSATAAKAKKANANANLKSKVNKA) are compositionally biased toward low complexity. Residues 1-183 (MPSATAAKAK…ATPALPVPEP (183 aa)) are disordered. A compositionally biased stretch (acidic residues) spans 40-98 (DESDFGSELDVEDESAASDEEDEDEDEDEHDLEEGVSDEGEGVSDEEEGVSDEDEDEEN). A compositionally biased stretch (basic and acidic residues) spans 161–173 (KQAEAPKTEKTEE). Residues 195–223 (TTFDALNVRPWLVQSLANMAIKRPTGIQK) carry the Q motif motif. One can recognise a Helicase ATP-binding domain in the interval 226–406 (IPEILKGRDC…ERPPIPGRAP (181 aa)). 239–246 (SRTGSGKT) serves as a coordination point for ATP. Positions 348 to 351 (DEAD) match the DEAD box motif. The Helicase C-terminal domain occupies 438–589 (YLHMFLLTPQ…GVNLETRVIR (152 aa)).

This sequence belongs to the DEAD box helicase family. DDX49/DBP8 subfamily.

The protein resides in the nucleus. The protein localises to the nucleolus. The enzyme catalyses ATP + H2O = ADP + phosphate + H(+). Functionally, ATP-binding RNA helicase involved in 40S ribosomal subunit biogenesis and is required for the normal formation of 18S rRNAs through pre-rRNA processing at A0, A1 and A2 sites. Required for vegetative growth. The protein is ATP-dependent RNA helicase dbp-8 (dbp-8) of Neurospora crassa (strain ATCC 24698 / 74-OR23-1A / CBS 708.71 / DSM 1257 / FGSC 987).